We begin with the raw amino-acid sequence, 374 residues long: Erythronate-4-phosphate dehydrogenase (374 aa).

Substrate-binding residues include S45 and T67. D147 is an NAD(+) binding site. The active site involves R208. An NAD(+)-binding site is contributed by D232. Residue E237 is part of the active site. The active-site Proton donor is H254. G257 is a binding site for NAD(+).

Belongs to the D-isomer specific 2-hydroxyacid dehydrogenase family. PdxB subfamily. Homodimer.

It localises to the cytoplasm. The enzyme catalyses 4-phospho-D-erythronate + NAD(+) = (R)-3-hydroxy-2-oxo-4-phosphooxybutanoate + NADH + H(+). It functions in the pathway cofactor biosynthesis; pyridoxine 5'-phosphate biosynthesis; pyridoxine 5'-phosphate from D-erythrose 4-phosphate: step 2/5. In terms of biological role, catalyzes the oxidation of erythronate-4-phosphate to 3-hydroxy-2-oxo-4-phosphonooxybutanoate. This chain is Erythronate-4-phosphate dehydrogenase, found in Pseudoalteromonas atlantica (strain T6c / ATCC BAA-1087).